The primary structure comprises 152 residues: Superoxide dismutase [Cu-Zn] (152 aa).

His-45, His-47, and His-62 together coordinate Cu cation. Cysteines 56 and 145 form a disulfide. Zn(2+) contacts are provided by His-62, His-70, His-79, and Asp-82. Residue His-119 participates in Cu cation binding.

The protein belongs to the Cu-Zn superoxide dismutase family. In terms of assembly, homodimer. It depends on Cu cation as a cofactor. The cofactor is Zn(2+).

The protein resides in the cytoplasm. The enzyme catalyses 2 superoxide + 2 H(+) = H2O2 + O2. Destroys radicals which are normally produced within the cells and which are toxic to biological systems. The chain is Superoxide dismutase [Cu-Zn] (SODCC) from Brassica oleracea var. capitata (Cabbage).